The sequence spans 117 residues: Minor capsid protein p17 (117 aa).

Asparagine 12 is a glycosylation site (N-linked (GlcNAc...) asparagine; by host). A helical transmembrane segment spans residues 39-59; the sequence is AILLGILILLVIILIIVAIVY. N-linked (GlcNAc...) asparagine; by host glycosylation is found at asparagine 61 and asparagine 97.

The protein belongs to the asfivirus minor capsid protein p17 family. As to quaternary structure, interacts with the minor capsid protein M1249L and with the hexon capsid protein p72 capsomers; these interactions form a rigid zipper structure that stabilizes the capsomers. Interacts with host STING1.

It is found in the virion membrane. The protein resides in the host endoplasmic reticulum membrane. The protein localises to the host Golgi apparatus membrane. Its function is as follows. Together with the penton and the other minor capsid proteins (M1249L, p49), forms a complicated network immediately below the outer capsid shell, stabilizing the whole capsid. Three copies of p17 encircle each p72 capsomer in the inner capsid shell, anchoring p72 capsomers on the inner membrane. Required for the assembly of the capsid and icosahedral morphogenesis. Additionally, inhibits the host cGAS-STING pathway through its interaction with STING1 and subsequent interference of the recruitment of downstream components TBK1 and IKBKE. The chain is Minor capsid protein p17 from African swine fever virus (strain Badajoz 1971 Vero-adapted) (Ba71V).